We begin with the raw amino-acid sequence, 154 residues long: NADPH-dependent 7-cyano-7-deazaguanine reductase (154 aa).

The Thioimide intermediate role is filled by cysteine 52. The active-site Proton donor is aspartate 59. Substrate contacts are provided by residues 74–76 (VES) and 93–94 (HE).

Belongs to the GTP cyclohydrolase I family. QueF type 1 subfamily.

The protein resides in the cytoplasm. The enzyme catalyses 7-aminomethyl-7-carbaguanine + 2 NADP(+) = 7-cyano-7-deazaguanine + 2 NADPH + 3 H(+). Its pathway is tRNA modification; tRNA-queuosine biosynthesis. Its function is as follows. Catalyzes the NADPH-dependent reduction of 7-cyano-7-deazaguanine (preQ0) to 7-aminomethyl-7-deazaguanine (preQ1). This is NADPH-dependent 7-cyano-7-deazaguanine reductase from Rhizobium rhizogenes (strain K84 / ATCC BAA-868) (Agrobacterium radiobacter).